A 123-amino-acid polypeptide reads, in one-letter code: Histone H2B (123 aa).

The disordered stretch occupies residues 1–31 (MPPKVASKGAKKAASKAKAARSGEKKKKRRR). Over residues 9–31 (GAKKAASKAKAARSGEKKKKRRR) the composition is skewed to basic residues. An O-linked (GlcNAc) serine glycan is attached at S110. Residue K118 forms a Glycyl lysine isopeptide (Lys-Gly) (interchain with G-Cter in ubiquitin) linkage.

Belongs to the histone H2B family. In terms of assembly, the nucleosome is a histone octamer containing two molecules each of H2A, H2B, H3 and H4 assembled in one H3-H4 heterotetramer and two H2A-H2B heterodimers. The octamer wraps approximately 147 bp of DNA. Monoubiquitination of Lys-118 gives a specific tag for epigenetic transcriptional activation and is also prerequisite for histone H3 'Lys-4' and 'Lys-79' methylation. Post-translationally, glcNAcylation at Ser-110 promotes monoubiquitination of Lys-118. It fluctuates in response to extracellular glucose, and associates with transcribed genes.

The protein resides in the nucleus. It is found in the chromosome. Core component of nucleosome. Nucleosomes wrap and compact DNA into chromatin, limiting DNA accessibility to the cellular machineries which require DNA as a template. Histones thereby play a central role in transcription regulation, DNA repair, DNA replication and chromosomal stability. DNA accessibility is regulated via a complex set of post-translational modifications of histones, also called histone code, and nucleosome remodeling. The chain is Histone H2B from Platynereis dumerilii (Dumeril's clam worm).